The sequence spans 165 residues: Endoribonuclease YbeY (165 aa).

Histidine 130, histidine 134, and histidine 140 together coordinate Zn(2+).

The protein belongs to the endoribonuclease YbeY family. It depends on Zn(2+) as a cofactor.

The protein localises to the cytoplasm. Single strand-specific metallo-endoribonuclease involved in late-stage 70S ribosome quality control and in maturation of the 3' terminus of the 16S rRNA. The chain is Endoribonuclease YbeY from Streptococcus pneumoniae serotype 2 (strain D39 / NCTC 7466).